We begin with the raw amino-acid sequence, 293 residues long: Ribosomal protein L11 methyltransferase (293 aa).

Positions 145, 166, 188, and 230 each coordinate S-adenosyl-L-methionine.

Belongs to the methyltransferase superfamily. PrmA family.

It localises to the cytoplasm. The catalysed reaction is L-lysyl-[protein] + 3 S-adenosyl-L-methionine = N(6),N(6),N(6)-trimethyl-L-lysyl-[protein] + 3 S-adenosyl-L-homocysteine + 3 H(+). Functionally, methylates ribosomal protein L11. This Pasteurella multocida (strain Pm70) protein is Ribosomal protein L11 methyltransferase.